We begin with the raw amino-acid sequence, 909 residues long: MERAMEQLNRLTRSLRRARTVELPDDNETAVYTLMPMVMADQHRSVSELLSNSKFDVNYAFGRVKRSLLHIAANCGSVECLVLLLKKGANPNYQDISGCTPLHLAARNGQKKCMSKLLEYSADVNICNNEGLTAIHWLAVNGRTELLHDLVQHVSDVDVEDAMGQTALHVACQNGHKTTVQCLLDSGADINRPNVSGATPLYFACSHGQRDTAQILLLRGAKYLSDKNGVTPLDLCVQGGYGETCEVLIQYHPRLFQTIIQMTQNEDLRENMLRQVLEHLSQQSESQYLKILTSLAEVATTNGHKLLSISSNYDAQMKSLLRIVRIFCHVFRIGPSSPSNGIDMGYNGNKTPRSQVFKPLELLWHSLDEWLVLIATELMKNKKDSTDITSILLKQKGQDQDGTSIPPFEPPGPGSYENLSTGTGESKPDVLGGKQEASADCQDVISMTANRLSAVIQAFYMCCSCQMPPGMTSPRFIEFVCKHDEVLKCFVNRNPKIIFDHFHFLLECPELMSRFMHIIKAQPFKDRCEWFYEHLHSGQPDSDMVHRPVNENDILLVHRDSIFRSSCEVVSKANCAKLKQGIAVRFHGEEGMGQGVVREWFDILSNEIVNPDYALFTQSADGTTFQPNSNSSVNPDHLNYFRFAGQILGLALNHRQLVNIYFTRSFYKHILGIPVNYQDVASIDPEYAKNLQWILDNDISDLGLELTFSVETDVFGAMEEVPLKPGGGSILVTQNNKAEYVQLVTELRMTRAIQPQINAFLQGFHMFIPPSLIQLFDEYELELLLSGMPEIDVSDWIKNTEYTSGYEREDPVIQWFWEVVEDITPEERVLLLQFVTGSSRVPHGGFANIMGGSGLQNFTIAAVPYTPNLLPTSSTCINMLKLPEYPSKEILKDRLLVALHCGSYGYTMA.

The interval 1 to 21 is N-terminal helix important for homodimerization; the sequence is MERAMEQLNRLTRSLRRARTV. 7 ANK repeats span residues 23-55, 64-93, 97-126, 130-159, 163-192, 196-226, and 228-253; these read LPDDNETAVYTLMPMVMADQHRSVSELLSNSKF, VKRSLLHIAANCGSVECLVLLLKKGANPNY, SGCTPLHLAARNGQKKCMSKLLEYSADVNI, EGLTAIHWLAVNGRTELLHDLVQHVSDVDV, MGQTALHVACQNGHKTTVQCLLDSGADINR, SGATPLYFACSHGQRDTAQILLLRGAKYLSD, and NGVTPLDLCVQGGYGETCEVLIQYHP. Positions 396-433 are disordered; that stretch reads KGQDQDGTSIPPFEPPGPGSYENLSTGTGESKPDVLGG. Residues 574 to 909 form the HECT domain; the sequence is NCAKLKQGIA…HCGSYGYTMA (336 aa). The Glycyl thioester intermediate role is filled by Cys876.

As to quaternary structure, homodimer. The homodimer is autoinhibited and stabilized by its N-terminal helix. Interacts with RAB1 (RAB1A, RAB1B or RAB1C), RAB4 (RAB4A or RAB4B) and RAB11 (RAB11A or RAB11B); in a GTP-dependent manner. Interacts with the 26S proteasomal complex through the 20S core proteasomal subunit. Interacts with RARB. In terms of processing, autoubiquitinated.

The protein localises to the golgi apparatus. The protein resides in the golgi stack membrane. Its subcellular location is the cytoplasm. It is found in the endoplasmic reticulum. It catalyses the reaction S-ubiquitinyl-[E2 ubiquitin-conjugating enzyme]-L-cysteine + [acceptor protein]-L-lysine = [E2 ubiquitin-conjugating enzyme]-L-cysteine + N(6)-ubiquitinyl-[acceptor protein]-L-lysine.. The protein operates within protein modification; protein ubiquitination. Its function is as follows. E3 ubiquitin-protein ligase involved in Golgi membrane fusion and regulation of small GTPases. Acts as a regulator of Golgi membrane dynamics during the cell cycle: recruited to Golgi membrane by Rab proteins and regulates postmitotic Golgi membrane fusion. Acts by mediating ubiquitination during mitotic Golgi disassembly, ubiquitination serving as a signal for Golgi reassembly later, after cell division. Specifically binds GTP-bound RAC1, mediating ubiquitination and subsequent degradation of active RAC1, thereby playing a role in host defense against pathogens. May also act as a transcription regulator via its interaction with RARB. The polypeptide is E3 ubiquitin-protein ligase HACE1 (HACE1) (Bos taurus (Bovine)).